Reading from the N-terminus, the 174-residue chain is Ferritin, heavy subunit (174 aa).

Residues 7–156 (QNFHKDCEAA…DWVTNLRRLG (150 aa)) form the Ferritin-like diiron domain. The Fe cation site is built by Glu24, Glu59, His62, Glu104, and Gln138.

This sequence belongs to the ferritin family. In terms of assembly, in liver, forms a heteromer consisting of middle and heavy subunits. The functional molecule forms a roughly spherical shell with a diameter of 12 nm and contains a central cavity into which the insoluble mineral iron core is deposited. Liver (at protein level).

The enzyme catalyses 4 Fe(2+) + O2 + 4 H(+) = 4 Fe(3+) + 2 H2O. Its function is as follows. Stores iron in a soluble, non-toxic, readily available form. Important for iron homeostasis. Has ferroxidase activity. Iron is taken up in the ferrous form and deposited as ferric hydroxides after oxidation. Also plays a role in delivery of iron to cells. Mediates iron uptake in capsule cells of the developing kidney. Delivery to lysosomes is mediated by the cargo receptor NCOA4 for autophagic degradation and release of iron. In Trematomus bernacchii (Emerald rockcod), this protein is Ferritin, heavy subunit.